A 157-amino-acid polypeptide reads, in one-letter code: MLECFESSPVAVAVGVSLLVLLLLCGIGCAWHWNRRESTPFTLPKFMQRRSSRQKDVTKTVSSSAYVISPSMKASVESKGHKSTAKRNKMHGNYENVEVCPPCTEGTTEKALYENTQPSNLEEHVYGNQTDPLYYNFQKPSPPPPQDDDIYILPDCD.

Residues 10–30 (VAVAVGVSLLVLLLLCGIGCA) form a helical membrane-spanning segment. The disordered stretch occupies residues 117-157 (QPSNLEEHVYGNQTDPLYYNFQKPSPPPPQDDDIYILPDCD). The span at 146–157 (QDDDIYILPDCD) shows a compositional bias: acidic residues.

The protein belongs to the GAPT family. Interacts with GRB2. In terms of tissue distribution, expressed primarily in B220+ splenocytes and total bone marrow cells. Expressed at lower levels in mast cells and dendritic cells. Not detected in T-cells and macrophages (at protein level).

The protein localises to the cell membrane. Functionally, negatively regulates B-cell proliferation following stimulation through the B-cell receptor. May play an important role in maintenance of marginal zone (MZ) B-cells. The sequence is that of Protein GAPT (Gapt) from Mus musculus (Mouse).